The sequence spans 743 residues: Polyribonucleotide nucleotidyltransferase (743 aa).

Asp489 and Asp495 together coordinate Mg(2+). Residues 556–618 enclose the KH domain; it reads PRIEKMHIGK…PCIDAAIGMI (63 aa). An S1 motif domain is found at 628-698; it reads GETYPGKITS…KTGKFKLSRK (71 aa). The tract at residues 704 to 743 is disordered; that stretch reads PEGYVEPQPRERRERREGGREGGRNFERRGGDRDHREPRG.

The protein belongs to the polyribonucleotide nucleotidyltransferase family. The cofactor is Mg(2+).

The protein localises to the cytoplasm. The catalysed reaction is RNA(n+1) + phosphate = RNA(n) + a ribonucleoside 5'-diphosphate. In terms of biological role, involved in mRNA degradation. Catalyzes the phosphorolysis of single-stranded polyribonucleotides processively in the 3'- to 5'-direction. The protein is Polyribonucleotide nucleotidyltransferase of Porphyromonas gingivalis (strain ATCC 33277 / DSM 20709 / CIP 103683 / JCM 12257 / NCTC 11834 / 2561).